Consider the following 291-residue polypeptide: Acetylglutamate kinase (291 aa).

Residues 65 to 66, Arg-87, and Asn-186 each bind substrate; that span reads GG.

Belongs to the acetylglutamate kinase family. ArgB subfamily.

The protein localises to the cytoplasm. It carries out the reaction N-acetyl-L-glutamate + ATP = N-acetyl-L-glutamyl 5-phosphate + ADP. The protein operates within amino-acid biosynthesis; L-arginine biosynthesis; N(2)-acetyl-L-ornithine from L-glutamate: step 2/4. Catalyzes the ATP-dependent phosphorylation of N-acetyl-L-glutamate. The protein is Acetylglutamate kinase of Mycolicibacterium vanbaalenii (strain DSM 7251 / JCM 13017 / BCRC 16820 / KCTC 9966 / NRRL B-24157 / PYR-1) (Mycobacterium vanbaalenii).